The following is an 84-amino-acid chain: UPF0473 protein CLI_2624 (84 aa).

Belongs to the UPF0473 family.

The sequence is that of UPF0473 protein CLI_2624 from Clostridium botulinum (strain Langeland / NCTC 10281 / Type F).